Consider the following 331-residue polypeptide: dTDP-glucose 4,6-dehydratase (331 aa).

NAD(+) is bound by residues 11 to 12 (FI), 33 to 36 (DALT), 57 to 58 (DI), 77 to 81 (FAAET), and serine 96. A substrate-binding site is contributed by threonine 81. Threonine 120 contributes to the substrate binding site. Aspartate 121 acts as the Proton donor in catalysis. Residues glutamate 122 and tyrosine 147 each act as proton acceptor in the active site. Position 147–151 (147–151 (YSSTK)) interacts with NAD(+). Asparagine 176 is a substrate binding site. Asparagine 177 is an NAD(+) binding site. Substrate-binding positions include 186 to 191 (KFIPRQ), 202 to 204 (KLY), arginine 211, asparagine 246, and 269 to 273 (DRAGH).

The protein belongs to the NAD(P)-dependent epimerase/dehydratase family. dTDP-glucose dehydratase subfamily. Homodimer. NAD(+) serves as cofactor.

The catalysed reaction is dTDP-alpha-D-glucose = dTDP-4-dehydro-6-deoxy-alpha-D-glucose + H2O. It functions in the pathway carbohydrate biosynthesis; dTDP-L-rhamnose biosynthesis. In terms of biological role, catalyzes the dehydration of dTDP-D-glucose to form dTDP-6-deoxy-D-xylo-4-hexulose via a three-step process involving oxidation, dehydration and reduction. Involved in the biosynthesis of the dTDP-L-rhamnose which is a component of the critical linker, D-N-acetylglucosamine-L-rhamnose disaccharide, which connects the galactan region of arabinogalactan to peptidoglycan via a phosphodiester linkage. This chain is dTDP-glucose 4,6-dehydratase (rmlB), found in Mycolicibacterium smegmatis (strain ATCC 700084 / mc(2)155) (Mycobacterium smegmatis).